The following is a 180-amino-acid chain: NAD(P)H-quinone oxidoreductase subunit J (180 aa).

Residues 1 to 16 (MNEETQTSELTNTDQG) are compositionally biased toward polar residues. A disordered region spans residues 1–23 (MNEETQTSELTNTDQGPQIEPGP).

It belongs to the complex I 30 kDa subunit family. NDH-1 can be composed of about 15 different subunits; different subcomplexes with different compositions have been identified which probably have different functions.

Its subcellular location is the cellular thylakoid membrane. It carries out the reaction a plastoquinone + NADH + (n+1) H(+)(in) = a plastoquinol + NAD(+) + n H(+)(out). It catalyses the reaction a plastoquinone + NADPH + (n+1) H(+)(in) = a plastoquinol + NADP(+) + n H(+)(out). Its function is as follows. NDH-1 shuttles electrons from an unknown electron donor, via FMN and iron-sulfur (Fe-S) centers, to quinones in the respiratory and/or the photosynthetic chain. The immediate electron acceptor for the enzyme in this species is believed to be plastoquinone. Couples the redox reaction to proton translocation, and thus conserves the redox energy in a proton gradient. Cyanobacterial NDH-1 also plays a role in inorganic carbon-concentration. The polypeptide is NAD(P)H-quinone oxidoreductase subunit J (Prochlorococcus marinus (strain MIT 9211)).